The following is a 60-amino-acid chain: Conotoxin Pu5.6 (60 aa).

An N-terminal signal peptide occupies residues 1-19 (MRCVPVFVILLLLIASAAS). A propeptide spanning residues 20–47 (IDAQQKTKDDAPLTSLNDNALQQHWNKR) is cleaved from the precursor.

Belongs to the conotoxin T superfamily. In terms of processing, contains 2 disulfide bonds that can be either 'C1-C3, C2-C4' or 'C1-C4, C2-C3', since these disulfide connectivities have been observed for conotoxins with cysteine framework V (for examples, see AC P0DQQ7 and AC P81755). In terms of tissue distribution, expressed by the venom duct.

Its subcellular location is the secreted. The polypeptide is Conotoxin Pu5.6 (Conus pulicarius (Flea-bitten cone)).